Here is a 697-residue protein sequence, read N- to C-terminus: Pentatricopeptide repeat-containing protein At5g46460, mitochondrial (697 aa).

The N-terminal 36 residues, 1–36 (MWSRAIFQRFRFRAFSISHVIHGKCYRSFSVTVEFQ), are a transit peptide targeting the mitochondrion. PPR repeat units follow at residues 39–64 (EVLI…VPSP), 65–95 (HVSL…MPVR), 96–130 (DVVS…SVVS), 131–157 (WTAM…MPVK), 158–192 (DTAA…NVIS), 193–223 (WTTM…CIKS), 224–258 (TSRP…GFLY), 259–289 (EEYV…KVHE), 290–324 (QVAV…SILP), 325–359 (NQST…GLET), 360–390 (DAFV…IFKK), 391–425 (SIVS…NKEP), 426–456 (DEIT…MSSG), and 463–497 (KIQH…PNEM). Residues 498 to 573 (VWLALLSACR…KPGSSWVVIR (76 aa)) form a type E motif region. Residues 574 to 602 (GKKHEFFSGDQPHCSRIYEKLEFLREKLK) form a type E(+) motif region. The segment at 603–697 (ELGYAPDYRS…NGTCSCGDYW (95 aa)) is type DYW motif.

It belongs to the PPR family. PCMP-H subfamily.

It is found in the mitochondrion. This is Pentatricopeptide repeat-containing protein At5g46460, mitochondrial (PCMP-H49) from Arabidopsis thaliana (Mouse-ear cress).